A 357-amino-acid polypeptide reads, in one-letter code: Probable dual-specificity RNA methyltransferase RlmN (357 aa).

Glu-95 (proton acceptor) is an active-site residue. The region spanning 106–340 (NRDRHTVCVS…VSVREEKGTD (235 aa)) is the Radical SAM core domain. Cys-113 and Cys-345 are disulfide-bonded. [4Fe-4S] cluster-binding residues include Cys-120, Cys-124, and Cys-127. S-adenosyl-L-methionine contacts are provided by residues 172-173 (GE), Ser-204, 227-229 (SLH), and Asn-302. Cys-345 (S-methylcysteine intermediate) is an active-site residue.

The protein belongs to the radical SAM superfamily. RlmN family. The cofactor is [4Fe-4S] cluster.

Its subcellular location is the cytoplasm. It carries out the reaction adenosine(2503) in 23S rRNA + 2 reduced [2Fe-2S]-[ferredoxin] + 2 S-adenosyl-L-methionine = 2-methyladenosine(2503) in 23S rRNA + 5'-deoxyadenosine + L-methionine + 2 oxidized [2Fe-2S]-[ferredoxin] + S-adenosyl-L-homocysteine. It catalyses the reaction adenosine(37) in tRNA + 2 reduced [2Fe-2S]-[ferredoxin] + 2 S-adenosyl-L-methionine = 2-methyladenosine(37) in tRNA + 5'-deoxyadenosine + L-methionine + 2 oxidized [2Fe-2S]-[ferredoxin] + S-adenosyl-L-homocysteine. Its function is as follows. Specifically methylates position 2 of adenine 2503 in 23S rRNA and position 2 of adenine 37 in tRNAs. The polypeptide is Probable dual-specificity RNA methyltransferase RlmN (Desulfitobacterium hafniense (strain DSM 10664 / DCB-2)).